Here is a 266-residue protein sequence, read N- to C-terminus: Undecaprenyl-diphosphatase (266 aa).

8 helical membrane-spanning segments follow: residues 1–21, 43–63, 83–103, 114–134, 144–164, 186–206, 219–239, and 245–265; these read MNIF…FLPI, FDVV…QAMI, SKLA…GMIF, VEII…ASWF, TISW…LIPG, IQFA…LILI, LLAM…VFFI, and VGMM…FFFI.

It belongs to the UppP family.

Its subcellular location is the cell inner membrane. The catalysed reaction is di-trans,octa-cis-undecaprenyl diphosphate + H2O = di-trans,octa-cis-undecaprenyl phosphate + phosphate + H(+). Its function is as follows. Catalyzes the dephosphorylation of undecaprenyl diphosphate (UPP). Confers resistance to bacitracin. The sequence is that of Undecaprenyl-diphosphatase from Ruthia magnifica subsp. Calyptogena magnifica.